A 419-amino-acid polypeptide reads, in one-letter code: Enolase (419 aa).

Gln-161 serves as a coordination point for (2R)-2-phosphoglycerate. Glu-205 functions as the Proton donor in the catalytic mechanism. Residues Asp-240, Glu-283, and Asp-309 each contribute to the Mg(2+) site. Positions 334, 363, 364, and 385 each coordinate (2R)-2-phosphoglycerate. Lys-334 serves as the catalytic Proton acceptor.

Belongs to the enolase family. It depends on Mg(2+) as a cofactor.

Its subcellular location is the cytoplasm. It is found in the secreted. The protein localises to the cell surface. It carries out the reaction (2R)-2-phosphoglycerate = phosphoenolpyruvate + H2O. The protein operates within carbohydrate degradation; glycolysis; pyruvate from D-glyceraldehyde 3-phosphate: step 4/5. Functionally, catalyzes the reversible conversion of 2-phosphoglycerate (2-PG) into phosphoenolpyruvate (PEP). It is essential for the degradation of carbohydrates via glycolysis. In Saccharolobus islandicus (strain L.S.2.15 / Lassen #1) (Sulfolobus islandicus), this protein is Enolase.